The primary structure comprises 430 residues: 5-methylthioadenosine/S-adenosylhomocysteine deaminase (430 aa).

Zn(2+) is bound by residues H63 and H65. Substrate contacts are provided by E92, R144, and H182. H209 serves as a coordination point for Zn(2+). The substrate site is built by E212 and D297. Position 297 (D297) interacts with Zn(2+).

This sequence belongs to the metallo-dependent hydrolases superfamily. MTA/SAH deaminase family. Requires Zn(2+) as cofactor.

It catalyses the reaction S-adenosyl-L-homocysteine + H2O + H(+) = S-inosyl-L-homocysteine + NH4(+). It carries out the reaction S-methyl-5'-thioadenosine + H2O + H(+) = S-methyl-5'-thioinosine + NH4(+). In terms of biological role, catalyzes the deamination of 5-methylthioadenosine and S-adenosyl-L-homocysteine into 5-methylthioinosine and S-inosyl-L-homocysteine, respectively. Is also able to deaminate adenosine. The sequence is that of 5-methylthioadenosine/S-adenosylhomocysteine deaminase from Desulforudis audaxviator (strain MP104C).